A 107-amino-acid polypeptide reads, in one-letter code: DNA-directed RNA polymerase subunit omega (107 aa).

A disordered region spans residues 81–107 (MEEEAAKGNADAGQGEGDAPKTPGQDG).

It belongs to the RNA polymerase subunit omega family. The RNAP catalytic core consists of 2 alpha, 1 beta, 1 beta' and 1 omega subunit. When a sigma factor is associated with the core the holoenzyme is formed, which can initiate transcription.

It catalyses the reaction RNA(n) + a ribonucleoside 5'-triphosphate = RNA(n+1) + diphosphate. In terms of biological role, promotes RNA polymerase assembly. Latches the N- and C-terminal regions of the beta' subunit thereby facilitating its interaction with the beta and alpha subunits. This is DNA-directed RNA polymerase subunit omega from Alkalilimnicola ehrlichii (strain ATCC BAA-1101 / DSM 17681 / MLHE-1).